Consider the following 628-residue polypeptide: NUAK family SNF1-like kinase 2 (628 aa).

Methionine 1 is modified (N-acetylmethionine). The region spanning 53-303 is the Protein kinase domain; that stretch reads YEFLETLGKG…LEDVASHWWV (251 aa). ATP is bound by residues 59 to 67 and lysine 81; that span reads LGKGTYGKV. The active-site Proton acceptor is aspartate 175. Position 208 is a phosphothreonine; by LKB1 (threonine 208). The segment at 355–493 is disordered; sequence KQHAPGGGST…KEQKPPQASG (139 aa). Residue serine 435 is modified to Phosphoserine. Residues 457–469 are compositionally biased toward low complexity; the sequence is SGYYSSPEPSESG. Phosphoserine is present on residues serine 523, serine 544, serine 547, and serine 573. Positions 531–562 are disordered; that stretch reads RPLARASRPSGAVSEDSILSSESFDQLDLPER.

Belongs to the protein kinase superfamily. CAMK Ser/Thr protein kinase family. SNF1 subfamily. It depends on Mg(2+) as a cofactor. Phosphorylated at Thr-208 by STK11/LKB1 in complex with STE20-related adapter-alpha (STRADA) pseudo kinase and CAB39. Autophosphorylation is also possible at Thr-208.

The enzyme catalyses L-seryl-[protein] + ATP = O-phospho-L-seryl-[protein] + ADP + H(+). It catalyses the reaction L-threonyl-[protein] + ATP = O-phospho-L-threonyl-[protein] + ADP + H(+). Activated by phosphorylation on Thr-208. Stress-activated kinase involved in tolerance to glucose starvation. Induces cell-cell detachment by increasing F-actin conversion to G-actin. Expression is induced by CD95 or TNF-alpha, via NF-kappa-B. Protects cells from CD95-mediated apoptosis and is required for the increased motility and invasiveness of CD95-activated tumor cells. Phosphorylates LATS1 and LATS2. Plays a key role in neural tube closure during embryonic development through LATS2 phosphorylation and regulation of the nuclear localization of YAP1 a critical downstream regulatory target in the Hippo signaling pathway. This chain is NUAK family SNF1-like kinase 2, found in Homo sapiens (Human).